Reading from the N-terminus, the 90-residue chain is MGSSSFLVLMVSLALVTLVAVEGVKKGIEKAGVCPADNVRCFKSDPPQCHTDQDCLGERKCCYLHCGFKCVIPVKELEEGGNKDEDVSRP.

Residues 1–23 (MGSSSFLVLMVSLALVTLVAVEG) form the signal peptide. Residues 27–74 (GIEKAGVCPADNVRCFKSDPPQCHTDQDCLGERKCCYLHCGFKCVIPV) form the WAP domain. Disulfide bonds link cysteine 34/cysteine 62, cysteine 41/cysteine 66, cysteine 49/cysteine 61, and cysteine 55/cysteine 70.

The protein localises to the secreted. Antibacterial protein. Putative acid-stable proteinase inhibitor. The polypeptide is WAP four-disulfide core domain protein 12 (WFDC12) (Pongo abelii (Sumatran orangutan)).